Here is a 134-residue protein sequence, read N- to C-terminus: Psoriasis susceptibility 1 candidate gene 2 protein homolog (134 aa).

A signal peptide spans 1–21; the sequence is MLTWKLLGLLVLCLCAGGISG. The interval 18 to 134 is disordered; that stretch reads GISGNGDPSP…DLDPPQEEYR (117 aa). Pro residues-rich tracts occupy residues 39–67 and 81–98; these read PPLP…PPGS and PPKP…PDDP. The span at 122–134 shows a compositional bias: acidic residues; the sequence is EEPDLDPPQEEYR.

Its subcellular location is the secreted. This is Psoriasis susceptibility 1 candidate gene 2 protein homolog (Psors1c2) from Mus musculus (Mouse).